The primary structure comprises 179 residues: Ribosome maturation factor RimM (179 aa).

The PRC barrel domain occupies 102-179 (DGEYYWYQLE…EMKVDWDADF (78 aa)).

Belongs to the RimM family. In terms of assembly, binds ribosomal protein uS19.

The protein resides in the cytoplasm. Functionally, an accessory protein needed during the final step in the assembly of 30S ribosomal subunit, possibly for assembly of the head region. Essential for efficient processing of 16S rRNA. May be needed both before and after RbfA during the maturation of 16S rRNA. It has affinity for free ribosomal 30S subunits but not for 70S ribosomes. In Pseudomonas savastanoi pv. phaseolicola (strain 1448A / Race 6) (Pseudomonas syringae pv. phaseolicola (strain 1448A / Race 6)), this protein is Ribosome maturation factor RimM.